A 370-amino-acid chain; its full sequence is Coiled-coil domain-containing protein 89 (370 aa).

Residues 1–21 (MPQEEKTLRMDTPPPDEILGK) form a disordered region. Thr-12 carries the post-translational modification Phosphothreonine. Residues 36–346 (KEMDGLREAL…YDELRLQSEA (311 aa)) are a coiled coil.

This sequence belongs to the CCDC89 family. Interacts with HEY1. As to expression, expression is restricted to the adult testis, where localization is almost exclusive to round spermatids.

It is found in the cytoplasm. Its subcellular location is the nucleus. This Mus musculus (Mouse) protein is Coiled-coil domain-containing protein 89.